Reading from the N-terminus, the 159-residue chain is Phosphopantetheine adenylyltransferase (159 aa).

Threonine 9 lines the substrate pocket. Residues 9–10 and histidine 17 contribute to the ATP site; that span reads TF. Residues lysine 41, leucine 73, and arginine 87 each contribute to the substrate site. Residues 88 to 90, glutamate 98, and 123 to 129 each bind ATP; these read GLR and YSFISST.

This sequence belongs to the bacterial CoaD family. Homohexamer. Mg(2+) is required as a cofactor.

Its subcellular location is the cytoplasm. It carries out the reaction (R)-4'-phosphopantetheine + ATP + H(+) = 3'-dephospho-CoA + diphosphate. It functions in the pathway cofactor biosynthesis; coenzyme A biosynthesis; CoA from (R)-pantothenate: step 4/5. Its function is as follows. Reversibly transfers an adenylyl group from ATP to 4'-phosphopantetheine, yielding dephospho-CoA (dPCoA) and pyrophosphate. This Pseudomonas fluorescens (strain ATCC BAA-477 / NRRL B-23932 / Pf-5) protein is Phosphopantetheine adenylyltransferase.